A 376-amino-acid chain; its full sequence is 1-deoxy-D-xylulose 5-phosphate reductoisomerase (376 aa).

6 residues coordinate NADPH: Thr12, Gly13, Ser14, Ile15, Asn39, and Asn116. Lys117 serves as a coordination point for 1-deoxy-D-xylulose 5-phosphate. Glu118 lines the NADPH pocket. Asp142 is a Mn(2+) binding site. Positions 143, 144, 164, and 187 each coordinate 1-deoxy-D-xylulose 5-phosphate. Glu144 provides a ligand contact to Mn(2+). Residue Gly193 coordinates NADPH. Residues Ser200, Asn205, Lys206, and Glu209 each contribute to the 1-deoxy-D-xylulose 5-phosphate site. Position 209 (Glu209) interacts with Mn(2+).

It belongs to the DXR family. Requires Mg(2+) as cofactor. Mn(2+) is required as a cofactor.

It carries out the reaction 2-C-methyl-D-erythritol 4-phosphate + NADP(+) = 1-deoxy-D-xylulose 5-phosphate + NADPH + H(+). Its pathway is isoprenoid biosynthesis; isopentenyl diphosphate biosynthesis via DXP pathway; isopentenyl diphosphate from 1-deoxy-D-xylulose 5-phosphate: step 1/6. Its function is as follows. Catalyzes the NADPH-dependent rearrangement and reduction of 1-deoxy-D-xylulose-5-phosphate (DXP) to 2-C-methyl-D-erythritol 4-phosphate (MEP). The protein is 1-deoxy-D-xylulose 5-phosphate reductoisomerase of Thermotoga maritima (strain ATCC 43589 / DSM 3109 / JCM 10099 / NBRC 100826 / MSB8).